The primary structure comprises 384 residues: uncharacterized protein (384 aa).

The next 12 membrane-spanning stretches (helical) occupy residues 22–42 (LAFFIAGLGMAAWAPLVPFAK), 52–72 (LGLLLLCIGIGSMLAMPLTGV), 81–101 (AVILLAGAVLCLDLPLLVLMN), 106–126 (MAIALLVFGAAMGIIDVAMNI), 143–163 (FHGLFSVGGIVGAGGVSALLW), 164–184 (LGLNPLTAIMATVVLMIILLL), 202–222 (LFVFPRGWVMFIGFLCFVMFL), 240–260 (GMSPSQAGMGYAVFAIAMTLG), 276–296 (VLLGGSLCSAIGIIIAISIDS), 299–319 (AAIIGFMLVGFGASNVVPILF), 327–347 (VMPANLAVASITTIGYAGILA), and 352–372 (IGFIAQLSSLSVAFGCVALLL).

The protein belongs to the major facilitator superfamily.

Its subcellular location is the membrane. This is an uncharacterized protein from Yersinia pestis.